The following is a 331-amino-acid chain: UDP-GalNAc:beta-1,3-N-acetylgalactosaminyltransferase 1 (331 aa).

The Cytoplasmic segment spans residues 1-20 (MASALWTVLPSRMSLRSLKW). The helical; Signal-anchor for type II membrane protein transmembrane segment at 21–43 (SLLLLSLLSFFVMWYLSLPHYNV) threads the bilayer. The Lumenal portion of the chain corresponds to 44-331 (IERVNWMYFY…VMLRNTTCHY (288 aa)). Asparagine 72, asparagine 154, asparagine 198, asparagine 212, and asparagine 326 each carry an N-linked (GlcNAc...) asparagine glycan.

This sequence belongs to the glycosyltransferase 31 family. The cofactor is Mg(2+). Higher expression in heart and brain, and to a lesser extent in lung, placenta, kidney and testis. Lower expression in liver, spleen and stomach. No expression in skeletal muscle.

It localises to the golgi apparatus membrane. It carries out the reaction a globoside Gb3Cer (d18:1(4E)) + UDP-N-acetyl-alpha-D-galactosamine = a globoside Gb4Cer (d18:1(4E)) + UDP + H(+). It functions in the pathway protein modification; protein glycosylation. Its function is as follows. Transfers N-acetylgalactosamine onto globotriaosylceramide. Plays a critical role in preimplantation stage embryonic development. The chain is UDP-GalNAc:beta-1,3-N-acetylgalactosaminyltransferase 1 from Homo sapiens (Human).